The sequence spans 1085 residues: Solute carrier family 12 member 4 (1085 aa).

The Cytoplasmic segment spans residues 1–119 (MPHFTVVPVD…RRAAKAPSMG (119 aa)). A phosphoserine mark is found at serine 24, serine 47, serine 51, serine 81, and serine 88. A disordered region spans residues 32-56 (AEREDSDGQGNHRENSPFLSPLDAS). A discontinuously helical membrane pass occupies residues 120-141 (TLMGVYLPCLQNIFGVILFLRL). K(+)-binding residues include asparagine 131 and isoleucine 132. Residues 142–149 (TWMVGTAG) are Extracellular-facing. The helical transmembrane segment at 150 to 172 (VLQALLIVLICCCCTLLTAISMS) threads the bilayer. Topologically, residues 173–196 (AIATNGVVPAGGSYFMISRSLGPE) are cytoplasmic. The helical transmembrane segment at 197–225 (FGGAVGLCFYLGTTFAAAMYILGAIEILL) threads the bilayer. Tyrosine 216 serves as a coordination point for K(+). Residues 226–248 (TYIAPPAAIFYPSGTHDMSSATL) are Extracellular-facing. 2 helical membrane passes run 249 to 271 (NNMR…VGVK) and 272 to 297 (YVNK…GGIK). Residues 298 to 419 (SAFDPPVFPV…LYVVADIATS (122 aa)) lie on the Extracellular side of the membrane. Residues cysteine 308 and cysteine 323 are joined by a disulfide bond. Asparagine 312, asparagine 331, and asparagine 347 each carry an N-linked (GlcNAc...) asparagine glycan. Residues cysteine 343 and cysteine 353 are joined by a disulfide bond. A helical transmembrane segment spans residues 420-440 (FTVLVGIFFPSVTGIMAGSNR). Residues proline 429 and threonine 432 each coordinate K(+). Chloride is bound by residues glycine 433, isoleucine 434, and methionine 435. Topologically, residues 441 to 450 (SGDLRDAQKS) are cytoplasmic. The chain crosses the membrane as a helical span at residues 451 to 473 (IPVGTILAIVTTSLVYFSSVILF). Over 474–504 (GACIEGVVLRDKYGDGVSRNLVVGTLAWPSP) the chain is Extracellular. A helical transmembrane segment spans residues 505–531 (WVIVVGSFFSTCGAGLQSLTGAPRLLQ). Residues 532 to 554 (AIAKDNIIPFLRVFGHGKANGEP) lie on the Cytoplasmic side of the membrane. 2 consecutive transmembrane segments (helical) span residues 555 to 575 (TWAL…ASLD) and 576 to 598 (MVAP…ACAV). Tyrosine 589 lines the chloride pocket. Over 599 to 612 (QTLLRTPNWRPRFK) the chain is Cytoplasmic. Transmembrane regions (helical) follow at residues 613-635 (YYHW…VSSW) and 636-651 (YYAL…IYKY). At 652-1085 (IEYQGAEKEW…GGREVITIYS (434 aa)) the chain is on the cytoplasmic side. Residues 665–681 (IRGLSLSAARYALLRLE) are scissor helix. The ATP site is built by leucine 697, lysine 699, lysine 707, tyrosine 708, and valine 730. At serine 734 the chain carries Phosphoserine. 3 residues coordinate ATP: glycine 794, tryptophan 795, and tyrosine 797. Phosphoserine occurs at positions 916 and 967. Threonine 983 is subject to Phosphothreonine. Serine 1050 is modified (phosphoserine).

This sequence belongs to the SLC12A transporter family. K/Cl co-transporter subfamily. In terms of assembly, homodimer; adopts a domain-swap conformation at the scissor helices connecting the transmembrane domain and C-terminal domain. Heterodimer with other K-Cl cotransporters. Post-translationally, N-glycosylated. In terms of processing, phosphorylated, phosphorylation may regulate transporter activity. Ubiquitous.

The protein resides in the cell membrane. It catalyses the reaction K(+)(in) + chloride(in) = K(+)(out) + chloride(out). With respect to regulation, inhibited by WNK3. Mediates electroneutral potassium-chloride cotransport when activated by cell swelling. May contribute to cell volume homeostasis in single cells. May be involved in the regulation of basolateral Cl(-) exit in NaCl absorbing epithelia. This is Solute carrier family 12 member 4 (Slc12a4) from Rattus norvegicus (Rat).